A 168-amino-acid chain; its full sequence is Cell division inhibitor SulA (168 aa).

Residues 106–112 are ftsZ binding; the sequence is ALLTGNY. The lon protease binding stretch occupies residues 161 to 168; sequence KIHSSLYH.

Belongs to the SulA family. As to quaternary structure, interacts with FtsZ. Post-translationally, is rapidly cleaved and degraded by the Lon protease once DNA damage is repaired.

Its function is as follows. Component of the SOS system and an inhibitor of cell division. Accumulation of SulA causes rapid cessation of cell division and the appearance of long, non-septate filaments. In the presence of GTP, binds a polymerization-competent form of FtsZ in a 1:1 ratio, thus inhibiting FtsZ polymerization and therefore preventing it from participating in the assembly of the Z ring. This mechanism prevents the premature segregation of damaged DNA to daughter cells during cell division. The chain is Cell division inhibitor SulA from Serratia proteamaculans (strain 568).